The primary structure comprises 53 residues: MRVCSFCHEEIEPGTGKMYVKRDGTIYFFCSSKCEKNMIKLGRVPRKVKWVKK.

Cys4, Cys7, Cys30, and Cys34 together coordinate Zn(2+). Residues 4–34 (CSFCHEEIEPGTGKMYVKRDGTIYFFCSSKC) form a C4-type zinc finger.

This sequence belongs to the eukaryotic ribosomal protein eL24 family. As to quaternary structure, part of the 50S ribosomal subunit. Forms a cluster with proteins L3 and L14. Zn(2+) serves as cofactor.

Binds to the 23S rRNA. The sequence is that of Large ribosomal subunit protein eL24 from Methanothermobacter thermautotrophicus (strain ATCC 29096 / DSM 1053 / JCM 10044 / NBRC 100330 / Delta H) (Methanobacterium thermoautotrophicum).